A 153-amino-acid polypeptide reads, in one-letter code: Putative riboflavin kinase (153 aa).

Mg(2+) is bound by residues Thr-28 and Asn-30. The active-site Nucleophile is Glu-80.

As to quaternary structure, monomer. Zn(2+) serves as cofactor. The cofactor is Mg(2+).

It is found in the cytoplasm. It carries out the reaction riboflavin + ATP = FMN + ADP + H(+). Its pathway is cofactor biosynthesis; FMN biosynthesis; FMN from riboflavin (ATP route): step 1/1. Its function is as follows. Catalyzes the phosphorylation of riboflavin (vitamin B2) to form flavin-mononucleotide (FMN). The chain is Putative riboflavin kinase from Drosophila melanogaster (Fruit fly).